Here is a 107-residue protein sequence, read N- to C-terminus: Antimicrobial peptide damicornin (107 aa).

A signal peptide spans 1-22; that stretch reads MKVLVILFGAMLVLMEFQKASA. The propeptide occupies 23–67; that stretch reads ATLLEDFDDDDDLLDDGGDFDLEANSDASSGNGNDSNDAVPEKRR. Positions 37–46 are enriched in acidic residues; that stretch reads DDGGDFDLEA. The interval 37-62 is disordered; it reads DDGGDFDLEANSDASSGNGNDSNDAV. Over residues 47–61 the composition is skewed to low complexity; the sequence is NSDASSGNGNDSNDA. 3 disulfides stabilise this stretch: C69/C105, C78/C99, and C85/C103. R106 is subject to Arginine amide.

It belongs to the coral AMP family. In terms of tissue distribution, is specifically expressed in the granular cells of the ectoderm.

It localises to the cytoplasm. It is found in the stress granule. The protein localises to the secreted. Its function is as follows. Cationic peptide with probable antimicrobial activity against coral pathogens. Shows in vitro activity against Gram-positive bacteria and the filamentous fungus F.oxysporum (MIC=1.25 uM). Gram-positive bacteria tested are B.megaterium (MIC=20 uM), S.aureus (MIC=5 uM), M. luteus (MIC=1.25 uM), B.stationis (MIC=10 uM), M.maritypicum (MIC=20 uM). Has no or little effect against Gram-negative bacteria (the coral pathogen V.coralliilyticus (MIC&gt;20 uM), V.aesturianus (MIC&gt;20 uM), V.shiloi (MIC&gt;20 uM), and E.coli (MIC=10 uM)). Has no hemolytic activity against sheep erythrocytes. This is Antimicrobial peptide damicornin from Pocillopora damicornis (Cauliflower coral).